The chain runs to 417 residues: UDP-N-acetylglucosamine 1-carboxyvinyltransferase (417 aa).

22–23 contacts phosphoenolpyruvate; the sequence is KN. Arginine 92 lines the UDP-N-acetyl-alpha-D-glucosamine pocket. The Proton donor role is filled by cysteine 116. A 2-(S-cysteinyl)pyruvic acid O-phosphothioketal modification is found at cysteine 116. 2 residues coordinate UDP-N-acetyl-alpha-D-glucosamine: aspartate 304 and isoleucine 326.

The protein belongs to the EPSP synthase family. MurA subfamily.

It localises to the cytoplasm. The enzyme catalyses phosphoenolpyruvate + UDP-N-acetyl-alpha-D-glucosamine = UDP-N-acetyl-3-O-(1-carboxyvinyl)-alpha-D-glucosamine + phosphate. It functions in the pathway cell wall biogenesis; peptidoglycan biosynthesis. Functionally, cell wall formation. Adds enolpyruvyl to UDP-N-acetylglucosamine. In Geotalea uraniireducens (strain Rf4) (Geobacter uraniireducens), this protein is UDP-N-acetylglucosamine 1-carboxyvinyltransferase.